The following is a 330-amino-acid chain: MPEFVTFSRNVFIPVTNICRNLCGYCTFRRDAGHPEAHLMSMSEIRPILERGEKAGCTEALFVFGEYAEEVPEYLLELEKLGYSTTVEYVADLCKLAIEIGLLPHTNAGILNRKELEILKPLNISMGLMLETTAELKAHSESPGKKPSTRIEMIRTAGKLKIPFTTGILVGIGETKDDRKRSLNTIADIHKEFGHIQEVIIQNFMPKPDTPMADHAPPSKEEMIDTVAIAREILPSDVAVQVAPNLIDPYSLIKAGASDLGGISPTTIDWINPEAEWPDVIELQKMIKEIELRERLPIYPQHIKKGWYSNNLSYLIETLTDKNGFKRKQR.

The Radical SAM core domain occupies 5 to 245 (VTFSRNVFIP…SDVAVQVAPN (241 aa)). [4Fe-4S] cluster-binding residues include Cys19, Cys23, and Cys26.

It belongs to the radical SAM superfamily. CofG family. Consists of two subunits, CofG and CofH. [4Fe-4S] cluster serves as cofactor.

It carries out the reaction 5-amino-5-(4-hydroxybenzyl)-6-(D-ribitylimino)-5,6-dihydrouracil + S-adenosyl-L-methionine = 7,8-didemethyl-8-hydroxy-5-deazariboflavin + 5'-deoxyadenosine + L-methionine + NH4(+) + H(+). Its pathway is cofactor biosynthesis; coenzyme F0 biosynthesis. In terms of biological role, catalyzes the radical-mediated synthesis of 7,8-didemethyl-8-hydroxy-5-deazariboflavin from 5-amino-5-(4-hydroxybenzyl)-6-(D-ribitylimino)-5,6-dihydrouracil. The polypeptide is 7,8-didemethyl-8-hydroxy-5-deazariboflavin synthase (Methanococcoides burtonii (strain DSM 6242 / NBRC 107633 / OCM 468 / ACE-M)).